The primary structure comprises 188 residues: Elongation factor P (188 aa).

An N6-(3,6-diaminohexanoyl)-5-hydroxylysine modification is found at lysine 34.

It belongs to the elongation factor P family. In terms of processing, may be beta-lysylated on the epsilon-amino group of Lys-34 by the combined action of EpmA and EpmB, and then hydroxylated on the C5 position of the same residue by EpmC (if this protein is present). Lysylation is critical for the stimulatory effect of EF-P on peptide-bond formation. The lysylation moiety may extend toward the peptidyltransferase center and stabilize the terminal 3-CCA end of the tRNA. Hydroxylation of the C5 position on Lys-34 may allow additional potential stabilizing hydrogen-bond interactions with the P-tRNA.

It localises to the cytoplasm. Its pathway is protein biosynthesis; polypeptide chain elongation. Involved in peptide bond synthesis. Alleviates ribosome stalling that occurs when 3 or more consecutive Pro residues or the sequence PPG is present in a protein, possibly by augmenting the peptidyl transferase activity of the ribosome. Modification of Lys-34 is required for alleviation. This Pectobacterium carotovorum subsp. carotovorum (strain PC1) protein is Elongation factor P.